The sequence spans 271 residues: Pyrroline-5-carboxylate reductase (271 aa).

The protein belongs to the pyrroline-5-carboxylate reductase family.

It localises to the cytoplasm. It carries out the reaction L-proline + NADP(+) = (S)-1-pyrroline-5-carboxylate + NADPH + 2 H(+). The catalysed reaction is L-proline + NAD(+) = (S)-1-pyrroline-5-carboxylate + NADH + 2 H(+). It functions in the pathway amino-acid biosynthesis; L-proline biosynthesis; L-proline from L-glutamate 5-semialdehyde: step 1/1. In terms of biological role, catalyzes the reduction of 1-pyrroline-5-carboxylate (PCA) to L-proline. The sequence is that of Pyrroline-5-carboxylate reductase from Staphylococcus saprophyticus subsp. saprophyticus (strain ATCC 15305 / DSM 20229 / NCIMB 8711 / NCTC 7292 / S-41).